A 1124-amino-acid chain; its full sequence is EGF and laminin G domain-containing protein (1124 aa).

Over 1-1055 the chain is Extracellular; that stretch reads RTFVKKYSAS…KLQAEDDDKT (1055 aa). 2 consecutive Laminin G-like domains span residues 8 to 203 and 210 to 369; these read SASR…NQKC and PFTF…WSGC. Cystine bridges form between cysteine 167–cysteine 203, cysteine 342–cysteine 369, cysteine 375–cysteine 386, cysteine 380–cysteine 395, cysteine 397–cysteine 412, cysteine 761–cysteine 788, cysteine 792–cysteine 803, cysteine 797–cysteine 812, and cysteine 814–cysteine 824. The EGF-like 1 domain maps to 371–413; that stretch reads ITDFCIFSPCLHGGECTQTGKTFSCGCSGTGYDKGPNSLSVCQ. In terms of domain architecture, Laminin G-like 3 spans 621–788; that stretch reads NTATFVNEDG…GEAVFVKSGC (168 aa). Residues 789–825 form the EGF-like 2 domain; it reads GAACENNSCKNHAKCLDNYNVYFCDCSKTPYYGYFCH. The disordered stretch occupies residues 1011–1047; it reads RATCGPEPKVPEIPTPRPVGQRADVSTPQGITTNPKL. The segment covering 1034–1046 has biased composition (polar residues); that stretch reads DVSTPQGITTNPK. The helical transmembrane segment at 1056–1076 threads the bilayer; the sequence is AIIVVVVLILVLLLVVLILVI. At 1077–1124 the chain is on the cytoplasmic side; sequence YWYWARHKGEYHTHEDDEELKATDPYIEPAAPRKLKGEEPEKKKEWYI. The tract at residues 1090 to 1124 is disordered; it reads HEDDEELKATDPYIEPAAPRKLKGEEPEKKKEWYI. Basic and acidic residues predominate over residues 1111-1124; the sequence is LKGEEPEKKKEWYI.

Component of the acid-insoluble organic matrix of the aragonitic skeleton (at protein level).

It localises to the membrane. The polypeptide is EGF and laminin G domain-containing protein (Acropora millepora (Staghorn coral)).